The sequence spans 485 residues: NADH-quinone oxidoreductase subunit N (485 aa).

Transmembrane regions (helical) follow at residues 8 to 28 (LIAL…MLSI), 35 to 55 (FLNA…LWFV), 71 to 91 (GFAM…CTFA), 105 to 125 (FYLL…ANHL), 127 to 147 (TLFL…GYAF), 159 to 179 (YTIL…LVYA), 203 to 223 (LLAG…LVPF), 235 to 255 (PAPV…GVVM), 271 to 291 (VVLG…ALSQ), 297 to 317 (LLGY…IALQ), 326 to 346 (VGVY…VVSL), 373 to 393 (AAVM…LGFI), 408 to 430 (WWLV…RVAV), and 455 to 475 (IVVL…QPLI).

The protein belongs to the complex I subunit 2 family. NDH-1 is composed of 13 different subunits. Subunits NuoA, H, J, K, L, M, N constitute the membrane sector of the complex.

Its subcellular location is the cell inner membrane. It carries out the reaction a quinone + NADH + 5 H(+)(in) = a quinol + NAD(+) + 4 H(+)(out). In terms of biological role, NDH-1 shuttles electrons from NADH, via FMN and iron-sulfur (Fe-S) centers, to quinones in the respiratory chain. The immediate electron acceptor for the enzyme in this species is believed to be ubiquinone. Couples the redox reaction to proton translocation (for every two electrons transferred, four hydrogen ions are translocated across the cytoplasmic membrane), and thus conserves the redox energy in a proton gradient. This is NADH-quinone oxidoreductase subunit N from Salmonella paratyphi A (strain ATCC 9150 / SARB42).